The chain runs to 485 residues: MSIWNSLSLSTRYSELPPLLFTHVPPQPLNNVHWIMWNEKLAKRFNLPLDPAADAELLSGFSGEVVPPQFSPLAMKYAGHQFGSYNPDLGDGRGLLLAEIKDKAGASFDIHLKGAGRTPYSRSGDGRAVLRSTIREYLCSEAMFGLGIPTTRALGMMGSDTPVYREGYETGALLLRVAETHVRFGHFEHLFYSNLLAEHKLLADKVIEWHFPDCLDNENPYAVMFNEIVDRTAKMIAHWQAVGFAHGVMNTDNMSIIGQTFDYGPFGFLDDYEPGYICNHSDYQGRYAFNQQPRIGLWNLSALAHALSPLIDKADLDQALEQYEVQLHGYFSQLMRQKLGLITKQDGDSRLFESMFELLSQNSVDYTRFLRELSNVDTHNEQAIIDLFIDRDAAKLWVSLYITRCEKEHETVASRCKKMREVNPKYILRNYLAQQAIDKAQEGDYSELEALSLLLRSPFDEHIEFEHYANLPPSWGKKMEISCSS.

ATP contacts are provided by Gly90, Gly92, Arg93, Lys113, Asp125, Gly126, Arg176, and Arg183. The active-site Proton acceptor is the Asp252. 2 residues coordinate Mg(2+): Asn253 and Asp262. ATP is bound at residue Asp262.

The protein belongs to the SELO family. It depends on Mg(2+) as a cofactor. Mn(2+) is required as a cofactor.

The catalysed reaction is L-seryl-[protein] + ATP = 3-O-(5'-adenylyl)-L-seryl-[protein] + diphosphate. It carries out the reaction L-threonyl-[protein] + ATP = 3-O-(5'-adenylyl)-L-threonyl-[protein] + diphosphate. It catalyses the reaction L-tyrosyl-[protein] + ATP = O-(5'-adenylyl)-L-tyrosyl-[protein] + diphosphate. The enzyme catalyses L-histidyl-[protein] + UTP = N(tele)-(5'-uridylyl)-L-histidyl-[protein] + diphosphate. The catalysed reaction is L-seryl-[protein] + UTP = O-(5'-uridylyl)-L-seryl-[protein] + diphosphate. It carries out the reaction L-tyrosyl-[protein] + UTP = O-(5'-uridylyl)-L-tyrosyl-[protein] + diphosphate. Nucleotidyltransferase involved in the post-translational modification of proteins. It can catalyze the addition of adenosine monophosphate (AMP) or uridine monophosphate (UMP) to a protein, resulting in modifications known as AMPylation and UMPylation. The protein is Protein nucleotidyltransferase YdiU of Aliivibrio salmonicida (strain LFI1238) (Vibrio salmonicida (strain LFI1238)).